The chain runs to 135 residues: ATP synthase epsilon chain (135 aa).

A disordered region spans residues 101–122; the sequence is TAVTKLEGQPSTPEKVKAQQLF.

Belongs to the ATPase epsilon chain family. F-type ATPases have 2 components, CF(1) - the catalytic core - and CF(0) - the membrane proton channel. CF(1) has five subunits: alpha(3), beta(3), gamma(1), delta(1), epsilon(1). CF(0) has three main subunits: a, b and c.

The protein resides in the cellular thylakoid membrane. In terms of biological role, produces ATP from ADP in the presence of a proton gradient across the membrane. The sequence is that of ATP synthase epsilon chain from Synechococcus sp. (strain CC9311).